We begin with the raw amino-acid sequence, 511 residues long: Piperic acid synthase CYP719A37 (511 aa).

The chain crosses the membrane as a helical span at residues 7–27 (VDPALFSAFVSIIFFFLGMFL). Residue Cys455 participates in heme binding.

Belongs to the cytochrome P450 family. It depends on heme as a cofactor. As to expression, specifically expressed in immature fruits and roots. Barely detectable in young leaves and flowering spadices.

The protein localises to the membrane. It localises to the endoplasmic reticulum membrane. The catalysed reaction is (E,E)-feruperate + reduced [NADPH--hemoprotein reductase] + O2 = (E,E)-piperate + oxidized [NADPH--hemoprotein reductase] + 2 H2O + H(+). The protein operates within aromatic compound metabolism. Cytochrome P450 monooxygenase involved in the biosynthesis of aromatic piperamides natural products such as piperine (1-piperoyl-piperidine), the pungent principle contributing, together with several terpenoids, to the aromatic properties of black pepper fruits, and displaying numerous pharmacological activities such as antiproliferative, antitumor, antiangiogenesis, antioxidant, antidiabetic, antiobesity, cardioprotective, antimicrobial, antiaging, and immunomodulatory effects. Catalyzes the conversion of feruperic acid (5-(4-hydroxy-3-methoxyphenyl)-2,4-pentadienoic acid) to piperic acid. Inactive toward ferulic acid and feruperine. This is Piperic acid synthase CYP719A37 from Piper nigrum (Black pepper).